Reading from the N-terminus, the 315-residue chain is Protoheme IX farnesyltransferase 1 (315 aa).

Transmembrane regions (helical) follow at residues proline 30–glutamine 50, glycine 56–alanine 76, isoleucine 106–leucine 126, leucine 132–phenylalanine 152, valine 162–isoleucine 182, alanine 186–isoleucine 206, leucine 249–leucine 269, and phenylalanine 289–isoleucine 309.

It belongs to the UbiA prenyltransferase family. Protoheme IX farnesyltransferase subfamily. Interacts with CtaA.

The protein localises to the cell membrane. It catalyses the reaction heme b + (2E,6E)-farnesyl diphosphate + H2O = Fe(II)-heme o + diphosphate. The protein operates within porphyrin-containing compound metabolism; heme O biosynthesis; heme O from protoheme: step 1/1. Its function is as follows. Converts heme B (protoheme IX) to heme O by substitution of the vinyl group on carbon 2 of heme B porphyrin ring with a hydroxyethyl farnesyl side group. This is Protoheme IX farnesyltransferase 1 from Bacillus velezensis (strain DSM 23117 / BGSC 10A6 / LMG 26770 / FZB42) (Bacillus amyloliquefaciens subsp. plantarum).